Consider the following 310-residue polypeptide: Malate dehydrogenase (310 aa).

NAD(+) contacts are provided by residues 7-12 (GAGNVG) and Asp32. Residues Arg81 and Arg87 each coordinate substrate. Residues Asn94 and 117-119 (VSN) contribute to the NAD(+) site. 2 residues coordinate substrate: Asn119 and Arg150. The Proton acceptor role is filled by His174.

It belongs to the LDH/MDH superfamily. MDH type 3 family. Homotetramer; arranged as a dimer of dimers.

The catalysed reaction is (S)-malate + NAD(+) = oxaloacetate + NADH + H(+). Catalyzes the reversible oxidation of malate to oxaloacetate. The sequence is that of Malate dehydrogenase from Chlorobaculum tepidum (strain ATCC 49652 / DSM 12025 / NBRC 103806 / TLS) (Chlorobium tepidum).